Reading from the N-terminus, the 201-residue chain is Recombination protein RecR (201 aa).

The C4-type zinc-finger motif lies at 59–74 (CEICGNMDTENICCIC). The Toprim domain maps to 82–177 (SVIAVVETVA…KISRLASGIP (96 aa)).

It belongs to the RecR family.

May play a role in DNA repair. It seems to be involved in an RecBC-independent recombinational process of DNA repair. It may act with RecF and RecO. The polypeptide is Recombination protein RecR (Rickettsia felis (strain ATCC VR-1525 / URRWXCal2) (Rickettsia azadi)).